Here is an 863-residue protein sequence, read N- to C-terminus: Leucine--tRNA ligase (863 aa).

A 'HIGH' region motif is present at residues 42–52 (PYPSGRLHMGH). Residues 622 to 626 (KMSKS) carry the 'KMSKS' region motif. Residue Lys625 coordinates ATP.

This sequence belongs to the class-I aminoacyl-tRNA synthetase family.

Its subcellular location is the cytoplasm. The enzyme catalyses tRNA(Leu) + L-leucine + ATP = L-leucyl-tRNA(Leu) + AMP + diphosphate. The sequence is that of Leucine--tRNA ligase from Shewanella frigidimarina (strain NCIMB 400).